The following is a 407-amino-acid chain: Spore germination protein KC (407 aa).

The first 20 residues, 1-20, serve as a signal peptide directing secretion; it reads MVRKCLLAVLMLLSVIVLPG. Cysteine 21 is lipidated: N-palmitoyl cysteine. Residue cysteine 21 is the site of S-diacylglycerol cysteine attachment.

This sequence belongs to the GerABKC lipoprotein family.

The protein localises to the cell membrane. Involved in the germination response to the combination of glucose, fructose, L-asparagine, and KCl. This Bacillus subtilis (strain 168) protein is Spore germination protein KC (gerKC).